The following is a 192-amino-acid chain: dTTP/UTP pyrophosphatase (192 aa).

Catalysis depends on aspartate 70, which acts as the Proton acceptor.

Belongs to the Maf family. YhdE subfamily. Requires a divalent metal cation as cofactor.

It is found in the cytoplasm. The catalysed reaction is dTTP + H2O = dTMP + diphosphate + H(+). It carries out the reaction UTP + H2O = UMP + diphosphate + H(+). In terms of biological role, nucleoside triphosphate pyrophosphatase that hydrolyzes dTTP and UTP. May have a dual role in cell division arrest and in preventing the incorporation of modified nucleotides into cellular nucleic acids. In Clostridium perfringens (strain ATCC 13124 / DSM 756 / JCM 1290 / NCIMB 6125 / NCTC 8237 / Type A), this protein is dTTP/UTP pyrophosphatase.